A 304-amino-acid chain; its full sequence is Non-specific ribonucleoside hydrolase RihC (304 aa).

The active site involves histidine 233.

It belongs to the IUNH family. RihC subfamily.

Hydrolyzes both purine and pyrimidine ribonucleosides with a broad-substrate specificity. The protein is Non-specific ribonucleoside hydrolase RihC of Escherichia fergusonii (strain ATCC 35469 / DSM 13698 / CCUG 18766 / IAM 14443 / JCM 21226 / LMG 7866 / NBRC 102419 / NCTC 12128 / CDC 0568-73).